The primary structure comprises 1233 residues: ATP-dependent helicase/nuclease subunit A (1233 aa).

Positions 3–474 (TKWTEEQKQA…ILLYKNFRSR (472 aa)) constitute a UvrD-like helicase ATP-binding domain. 24–31 (AAAGSGKT) serves as a coordination point for ATP. The UvrD-like helicase C-terminal domain maps to 518–809 (VTGGAVELHL…RIMSIHKSKG (292 aa)). Residues 533–555 (VEEEVEEKEEEKNEEKDFEEEEE) form a disordered region.

The protein belongs to the helicase family. AddA subfamily. In terms of assembly, heterodimer of AddA and AddB/RexB. Requires Mg(2+) as cofactor.

It carries out the reaction Couples ATP hydrolysis with the unwinding of duplex DNA by translocating in the 3'-5' direction.. It catalyses the reaction ATP + H2O = ADP + phosphate + H(+). The heterodimer acts as both an ATP-dependent DNA helicase and an ATP-dependent, dual-direction single-stranded exonuclease. Recognizes the chi site generating a DNA molecule suitable for the initiation of homologous recombination. The AddA nuclease domain is required for chi fragment generation; this subunit has the helicase and 3' -&gt; 5' nuclease activities. The chain is ATP-dependent helicase/nuclease subunit A from Thermoanaerobacter pseudethanolicus (strain ATCC 33223 / 39E) (Clostridium thermohydrosulfuricum).